The sequence spans 216 residues: Transmembrane emp24 domain-containing protein eca (216 aa).

The first 20 residues, Met-1–Gly-20, serve as a signal peptide directing secretion. The Lumenal portion of the chain corresponds to Leu-21–Ser-182. Residues Arg-30–Val-126 enclose the GOLD domain. A coiled-coil region spans residues Ala-134–Asn-164. Residues Arg-183–Met-203 form a helical membrane-spanning segment. Residues Arg-204–Val-216 are Cytoplasmic-facing. Residues Lys-213–Val-216 carry the Prevents secretion from ER motif.

Belongs to the EMP24/GP25L family.

Its subcellular location is the endoplasmic reticulum membrane. Eca and bai are essential, though not redundant, for dorsoventral patterning of the embryo. Specifically required during early embryogenesis for the activity of maternal tkv, while the zygotic tkv is not affected. Involved in Golgi organization. This Drosophila ananassae (Fruit fly) protein is Transmembrane emp24 domain-containing protein eca.